A 164-amino-acid polypeptide reads, in one-letter code: Protein-export protein SecB (164 aa).

The protein belongs to the SecB family. As to quaternary structure, homotetramer, a dimer of dimers. One homotetramer interacts with 1 SecA dimer.

Its subcellular location is the cytoplasm. Functionally, one of the proteins required for the normal export of preproteins out of the cell cytoplasm. It is a molecular chaperone that binds to a subset of precursor proteins, maintaining them in a translocation-competent state. It also specifically binds to its receptor SecA. This is Protein-export protein SecB from Nitrosococcus oceani (strain ATCC 19707 / BCRC 17464 / JCM 30415 / NCIMB 11848 / C-107).